The following is a 156-amino-acid chain: Snaclec A6 (156 aa).

Residues 1 to 23 (MGRSISVSFGLLVVFLSLSGTGA) form the signal peptide. 3 cysteine pairs are disulfide-bonded: cysteine 27-cysteine 38, cysteine 55-cysteine 154, and cysteine 129-cysteine 146. A C-type lectin domain is found at 34-155 (HEGHCYKVFN…CGKPYRFTCE (122 aa)).

The protein belongs to the snaclec family. Heterodimer; disulfide-linked. In terms of tissue distribution, expressed by the venom gland.

Its subcellular location is the secreted. Interferes with one step of hemostasis (modulation of platelet aggregation, or coagulation cascade, for example). This chain is Snaclec A6, found in Macrovipera lebetinus (Levantine viper).